The following is a 238-amino-acid chain: Ribitol-5-phosphate cytidylyltransferase 1 (238 aa).

Residues 7–10 and 81–87 contribute to the CTP site; these read LAGG and GSDRNDT.

This sequence belongs to the IspD/TarI cytidylyltransferase family. TarI subfamily.

It catalyses the reaction D-ribitol 5-phosphate + CTP + H(+) = CDP-L-ribitol + diphosphate. It participates in cell wall biogenesis; poly(ribitol phosphate) teichoic acid biosynthesis. In terms of biological role, catalyzes the transfer of the cytidylyl group of CTP to D-ribitol 5-phosphate. The chain is Ribitol-5-phosphate cytidylyltransferase 1 from Staphylococcus aureus (strain USA300).